The primary structure comprises 458 residues: Cysteine protease ATG4C (458 aa).

Position 1 is an N-acetylmethionine (Met-1). Catalysis depends on Cys-111, which acts as the Nucleophile. Catalysis depends on residues Asp-345 and His-347. A Phosphoserine modification is found at Ser-451. Thr-452 bears the Phosphothreonine mark.

This sequence belongs to the peptidase C54 family.

The protein resides in the cytoplasm. It carries out the reaction [protein]-C-terminal L-amino acid-glycyl-phosphatidylethanolamide + H2O = [protein]-C-terminal L-amino acid-glycine + a 1,2-diacyl-sn-glycero-3-phosphoethanolamine. Inhibited by N-ethylmaleimide. Cysteine protease that plays a key role in autophagy by mediating both proteolytic activation and delipidation of ATG8 family proteins. The protease activity is required for proteolytic activation of ATG8 family proteins: cleaves the C-terminal amino acid of ATG8 proteins MAP1LC3 and GABARAPL2, to reveal a C-terminal glycine. Exposure of the glycine at the C-terminus is essential for ATG8 proteins conjugation to phosphatidylethanolamine (PE) and insertion to membranes, which is necessary for autophagy. In addition to the protease activity, also mediates delipidation of ATG8 family proteins. Catalyzes delipidation of PE-conjugated forms of ATG8 proteins during macroautophagy. Compared to ATG4B, the major protein for proteolytic activation of ATG8 proteins, shows weaker ability to cleave the C-terminal amino acid of ATG8 proteins, while it displays stronger delipidation activity. In contrast to other members of the family, weakly or not involved in phagophore growth during mitophagy. This chain is Cysteine protease ATG4C, found in Homo sapiens (Human).